The following is a 127-amino-acid chain: uncharacterized protein (127 aa).

This is an uncharacterized protein from Escherichia coli (strain K12).